The sequence spans 98 residues: NADH-ubiquinone oxidoreductase chain 4L (98 aa).

3 consecutive transmembrane segments (helical) span residues 1 to 21 (MSMV…GLLI), 30 to 50 (LLCL…TILT), and 61 to 81 (IILL…LVMI).

This sequence belongs to the complex I subunit 4L family. As to quaternary structure, core subunit of respiratory chain NADH dehydrogenase (Complex I) which is composed of 45 different subunits.

The protein localises to the mitochondrion inner membrane. The enzyme catalyses a ubiquinone + NADH + 5 H(+)(in) = a ubiquinol + NAD(+) + 4 H(+)(out). Its function is as follows. Core subunit of the mitochondrial membrane respiratory chain NADH dehydrogenase (Complex I) which catalyzes electron transfer from NADH through the respiratory chain, using ubiquinone as an electron acceptor. Part of the enzyme membrane arm which is embedded in the lipid bilayer and involved in proton translocation. In Gulo gulo (Wolverine), this protein is NADH-ubiquinone oxidoreductase chain 4L (MT-ND4L).